A 742-amino-acid chain; its full sequence is MYTQTLYELSQEAERLLQLSRQQLQLLEKMPLSVPGDDAPQLALPWSQPNIAERHAMLNNELRKISRLEMVLAIVGTMKAGKSTTINAIVGTEVLPNRNRPMTALPTLIRHTPGQKEPVLHFSHVAPIDCLIQQLQQRLRDCDIKHLTDVLEIDKDMRALMQRIENGVAFEKYYLGAQPIFHCLKSLNDLVRLAKALDVDFPFSAYAAIEHIPVIEVEFVHLAGLESYPGQLTLLDTPGPNEAGQPHLQKMLNQQLARASAVLAVLDYTQLKSISDEEVREAILAVGQSVPLYVLVNKFDQQDRNSDDADQVRALISGTLMKGCITPQQIFPVSSMWGYLANRARYELANNGKLPPPEQQRWVEDFAHAALGRRWRHADLADLEHIRHAADQLWEDSLFAQPIQALLHAAYANASLYALRSAAHKLLNYAQQAREYLDFRAHGLNVACEQLRQNIHQIEESLQLLQLNQAQVSGEIKHEIELALTSANHFLRQQQDALKVQLAALFQDDSEPLSEIRTRCETLLQTAQNTISRDFTLRFAELESTLCRVLTDVIRPIEQQVKMELSESGFRPGFHFPVFHGVVPHFNTRQLFSEVISRQEATDEQSTRLGVVRETFSRWLNQPDWGRGNEKSPTETVDYSVLQRALSAEVDLYCQQMAKVLAEQVDESVTAGMNTFFAEFASCLTELQTRLRESLALRQQNESVVRLMQQQLQQTVMTHGWIYTDAQLLRDDIQTLFTAERY.

The segment at Q41–P45 is clamp-binding consensus. Residues S66–P402 enclose the Dynamin-type G domain. The tract at residues G76–S83 is G1 motif. Positions M102–A104 are G2 motif. The interval D236–G239 is G3 motif. Positions N297–D300 are G4 motif. A G5 motif region spans residues F331 to S334. Residues R440–V472 are a coiled coil.

Belongs to the TRAFAC class dynamin-like GTPase superfamily. Dynamin/Fzo/YdjA family. In terms of assembly, forms homooligomers. Binds to the beta sliding clamp processivity factor (DnaN) in the presence and absence of DNA, may bind to the clamp itself as homodimers or trimers. Homooligomers may be able to bind more than 1 clamp complex.

It localises to the cytoplasm. In terms of biological role, important for the colocalization of sister nascent DNA strands after replication fork passage during DNA replication, and for positioning and subsequent partitioning of sister chromosomes. Does not have GTPase activity on its own. This chain is Clamp-binding protein CrfC (crfC), found in Escherichia coli (strain K12).